The sequence spans 979 residues: Mast/stem cell growth factor receptor Kit (979 aa).

Residues 1 to 27 (MRGARGAWDFLCVLLLLLLLGVQTGSS) form the signal peptide. Residues 28–527 (QPSVSPGEPS…QIHPHTLFTP (500 aa)) are Extracellular-facing. Ig-like C2-type domains lie at 29–114 (PSVS…VFVR), 123–207 (DLPL…LKVR), 214–311 (PVVS…LEVV), 320–413 (PMMS…VYVN), and 416–510 (PEIL…FNFA). Cys60 and Cys99 are oxidised to a cystine. N-linked (GlcNAc...) asparagine glycans are attached at residues Asn96, Asn132, and Asn147. 3 disulfide bridges follow: Cys138–Cys188, Cys153–Cys185, and Cys235–Cys293. Asn286, Asn296, Asn303, Asn355, Asn370, Asn403, Asn466, and Asn489 each carry an N-linked (GlcNAc...) asparagine glycan. Cys431 and Cys494 are disulfide-bonded. A helical membrane pass occupies residues 528–548 (LLIGFVIAAGMMCIIVMILTY). Topologically, residues 549–979 (KYLQKPMYEV…TQPLLVHEDV (431 aa)) are cytoplasmic. A phosphotyrosine; by autocatalysis mark is found at Tyr550, Tyr556, Tyr571, and Tyr573. Residue Tyr571 coordinates Mg(2+). The interval 571-573 (YVY) is important for interaction with phosphotyrosine-binding proteins. Residues 592-940 (LSFGKTLGAG…ISDSTNHIYS (349 aa)) form the Protein kinase domain. Residues 599-606 (GAGAFGKV), Lys626, and 674-680 (EYCCYGD) contribute to the ATP site. Phosphotyrosine; by autocatalysis occurs at positions 706, 724, and 733. A phosphoserine; by PKC/PRKCA mark is found at Ser744 and Ser749. The Proton acceptor role is filled by Asp795. Arg799 contacts ATP. The Mg(2+) site is built by Asn800 and Asp813. Ser824 is subject to Phosphoserine. A Phosphotyrosine; by autocatalysis modification is found at Tyr826. Ser894 carries the post-translational modification Phosphoserine. 2 positions are modified to phosphotyrosine; by autocatalysis: Tyr903 and Tyr939. Ser962 bears the Phosphoserine mark.

It belongs to the protein kinase superfamily. Tyr protein kinase family. CSF-1/PDGF receptor subfamily. As to quaternary structure, monomer in the absence of bound KITLG/SCF. Homodimer in the presence of bound KITLG/SCF, forming a heterotetramer with two KITLG/SCF molecules. Interacts (via phosphorylated tyrosine residues) with the adapter proteins GRB2 and GRB7 (via SH2 domain), and SH2B2/APS. Interacts (via C-terminus) with MPDZ (via the tenth PDZ domain). Interacts (via phosphorylated tyrosine residues) with PIK3R1 and PIK3 catalytic subunit. Interacts (via phosphorylated tyrosine) with CRK (isoform Crk-II), FYN, SHC1 and MATK/CHK (via SH2 domain). Interacts with LYN and FES/FPS. Interacts (via phosphorylated tyrosine residues) with the protein phosphatases PTPN6/SHP-1 (via SH2 domain), PTPN11/SHP-2 (via SH2 domain) and PTPRU. Interacts with PLCG1. Interacts with DOK1 and TEC. Interacts with IL1RAP (independent of stimulation with KITLG/SCF). A mast cell-specific KITLG/SCF-induced interleukin-33 signaling complex contains IL1RL1, IL1RAP, KIT and MYD88. In terms of processing, ubiquitinated by SOCS6. KIT is rapidly ubiquitinated after autophosphorylation induced by KITLG/SCF binding, leading to internalization and degradation. Post-translationally, autophosphorylated on tyrosine residues. KITLG/SCF binding promotes autophosphorylation. Phosphorylated tyrosine residues are important for interaction with specific binding partners.

Its subcellular location is the cell membrane. It catalyses the reaction L-tyrosyl-[protein] + ATP = O-phospho-L-tyrosyl-[protein] + ADP + H(+). Its activity is regulated as follows. Present in an inactive conformation in the absence of bound ligand. KITLG/SCF binding leads to dimerization and activation by autophosphorylation on tyrosine residues. Activity is down-regulated by PRKCA-mediated phosphorylation on serine residues. Functionally, tyrosine-protein kinase that acts as a cell-surface receptor for the cytokine KITLG/SCF and plays an essential role in the regulation of cell survival and proliferation, hematopoiesis, stem cell maintenance, gametogenesis, mast cell development, migration and function, and in melanogenesis. In response to KITLG/SCF binding, KIT can activate several signaling pathways. Phosphorylates PIK3R1, PLCG1, SH2B2/APS and CBL. Activates the AKT1 signaling pathway by phosphorylation of PIK3R1, the regulatory subunit of phosphatidylinositol 3-kinase. Activated KIT also transmits signals via GRB2 and activation of RAS, RAF1 and the MAP kinases MAPK1/ERK2 and/or MAPK3/ERK1. Promotes activation of STAT family members STAT1, STAT3, STAT5A and STAT5B. Activation of PLCG1 leads to the production of the cellular signaling molecules diacylglycerol and inositol 1,4,5-trisphosphate. KIT signaling is modulated by protein phosphatases, and by rapid internalization and degradation of the receptor. Activated KIT promotes phosphorylation of the protein phosphatases PTPN6/SHP-1 and PTPRU, and of the transcription factors STAT1, STAT3, STAT5A and STAT5B. Promotes phosphorylation of PIK3R1, CBL, CRK (isoform Crk-II), LYN, MAPK1/ERK2 and/or MAPK3/ERK1, PLCG1, SRC and SHC1. In Canis lupus familiaris (Dog), this protein is Mast/stem cell growth factor receptor Kit (KIT).